Reading from the N-terminus, the 577-residue chain is Zona pellucida sperm-binding protein 3 receptor (577 aa).

A signal peptide spans 1–32 (MTAWSLHELWKTSHSTLFQVTLATVLMAPVLG). Sushi domains lie at 33 to 92 (DCGP…FCAR), 93 to 154 (KRCK…ECVI), 155 to 219 (ATCE…ACEK), 220 to 279 (IVCH…TCEP), 280 to 346 (NGCI…GCER), and 347 to 412 (VCCP…SCEA). Cystine bridges form between Cys34–Cys78, Cys64–Cys90, Cys95–Cys136, Cys122–Cys152, Cys157–Cys200, Cys186–Cys217, Cys222–Cys264, Cys250–Cys277, Cys282–Cys332, Cys316–Cys344, Cys349–Cys397, and Cys382–Cys410. 2 N-linked (GlcNAc...) asparagine glycosylation sites follow: Asn72 and Asn81. Asn144, Asn195, and Asn204 each carry an N-linked (GlcNAc...) asparagine glycan. An N-linked (GlcNAc...) asparagine glycan is attached at Asn335. N-linked (GlcNAc...) asparagine glycans are attached at residues Asn426, Asn431, Asn434, Asn443, Asn462, Asn475, and Asn497. One can recognise a Sushi 7 domain in the interval 451–509 (AVCPKPEIINGNLSVEKEIYAEMENITIQCDSGYDLVGSSNIICLENRTWYPDIPFCIM). 2 disulfides stabilise this stretch: Cys453-Cys494 and Cys480-Cys507.

Homomultimer; disulfide-linked. Post-translationally, glycosylated. Testis specific.

The protein localises to the cytoplasmic vesicle. It is found in the secretory vesicle. Its subcellular location is the acrosome lumen. Functionally, binds to ZP3 glycoprotein in egg zona pellucida. Probably involved in interactions between sperm acrosome and egg zona pellucida during and immediately following the acrosome reaction. The protein is Zona pellucida sperm-binding protein 3 receptor (Zp3r) of Rattus norvegicus (Rat).